The sequence spans 324 residues: Ribosomal RNA small subunit methyltransferase H (324 aa).

Residues 40 to 42, Asp60, Leu94, Asp108, and His115 each bind S-adenosyl-L-methionine; that span reads AGH. A disordered region spans residues 301 to 324; sequence EEMKVNTRSRSAKLRVAERTGEDG. The segment covering 315–324 has biased composition (basic and acidic residues); that stretch reads RVAERTGEDG.

This sequence belongs to the methyltransferase superfamily. RsmH family.

The protein localises to the cytoplasm. The catalysed reaction is cytidine(1402) in 16S rRNA + S-adenosyl-L-methionine = N(4)-methylcytidine(1402) in 16S rRNA + S-adenosyl-L-homocysteine + H(+). In terms of biological role, specifically methylates the N4 position of cytidine in position 1402 (C1402) of 16S rRNA. This chain is Ribosomal RNA small subunit methyltransferase H, found in Maridesulfovibrio salexigens (strain ATCC 14822 / DSM 2638 / NCIMB 8403 / VKM B-1763) (Desulfovibrio salexigens).